We begin with the raw amino-acid sequence, 688 residues long: DNA-directed RNA polymerase subunit beta' (688 aa).

Residues Cys-69, Cys-71, Cys-87, and Cys-90 each contribute to the Zn(2+) site. Asp-493, Asp-495, and Asp-497 together coordinate Mg(2+).

It belongs to the RNA polymerase beta' chain family. RpoC1 subfamily. In plastids the minimal PEP RNA polymerase catalytic core is composed of four subunits: alpha, beta, beta', and beta''. When a (nuclear-encoded) sigma factor is associated with the core the holoenzyme is formed, which can initiate transcription. It depends on Mg(2+) as a cofactor. Requires Zn(2+) as cofactor.

Its subcellular location is the plastid. The protein localises to the chloroplast. It carries out the reaction RNA(n) + a ribonucleoside 5'-triphosphate = RNA(n+1) + diphosphate. Functionally, DNA-dependent RNA polymerase catalyzes the transcription of DNA into RNA using the four ribonucleoside triphosphates as substrates. In Chloranthus spicatus (Chulantree), this protein is DNA-directed RNA polymerase subunit beta'.